A 213-amino-acid chain; its full sequence is Ribonuclease HII (213 aa).

The 212-residue stretch at 2-213 (GRVAGIDEAG…KEWATWKRLR (212 aa)) folds into the RNase H type-2 domain. D8, E9, and D113 together coordinate a divalent metal cation.

Belongs to the RNase HII family. Requires Mn(2+) as cofactor. Mg(2+) is required as a cofactor.

It is found in the cytoplasm. The enzyme catalyses Endonucleolytic cleavage to 5'-phosphomonoester.. In terms of biological role, endonuclease that specifically degrades the RNA of RNA-DNA hybrids. The polypeptide is Ribonuclease HII (Thermofilum pendens (strain DSM 2475 / Hrk 5)).